We begin with the raw amino-acid sequence, 573 residues long: DNA ligase (573 aa).

Residue Glu-248 participates in ATP binding. Lys-250 serves as the catalytic N6-AMP-lysine intermediate. 6 residues coordinate ATP: Arg-255, Arg-270, Glu-299, Phe-340, Arg-432, and Lys-438.

Belongs to the ATP-dependent DNA ligase family. Mg(2+) serves as cofactor.

The enzyme catalyses ATP + (deoxyribonucleotide)n-3'-hydroxyl + 5'-phospho-(deoxyribonucleotide)m = (deoxyribonucleotide)n+m + AMP + diphosphate.. In terms of biological role, DNA ligase that seals nicks in double-stranded DNA during DNA replication, DNA recombination and DNA repair. The protein is DNA ligase of Methanocaldococcus jannaschii (strain ATCC 43067 / DSM 2661 / JAL-1 / JCM 10045 / NBRC 100440) (Methanococcus jannaschii).